The primary structure comprises 217 residues: Thymidylate kinase (217 aa).

16–23 (GIDGAGKT) lines the ATP pocket.

This sequence belongs to the thymidylate kinase family.

The catalysed reaction is dTMP + ATP = dTDP + ADP. In terms of biological role, phosphorylation of dTMP to form dTDP in both de novo and salvage pathways of dTTP synthesis. The polypeptide is Thymidylate kinase (Xylella fastidiosa (strain M12)).